Reading from the N-terminus, the 269-residue chain is Diaminopimelate epimerase (269 aa).

Residues Asn20 and Asn63 each contribute to the substrate site. The Proton donor role is filled by Cys72. Substrate is bound by residues 73-74, Asn179, and 197-198; these read GN and ER. Cys207 acts as the Proton acceptor in catalysis. Residue 208-209 participates in substrate binding; the sequence is GT.

The protein belongs to the diaminopimelate epimerase family. Homodimer.

Its subcellular location is the cytoplasm. The catalysed reaction is (2S,6S)-2,6-diaminopimelate = meso-2,6-diaminopimelate. The protein operates within amino-acid biosynthesis; L-lysine biosynthesis via DAP pathway; DL-2,6-diaminopimelate from LL-2,6-diaminopimelate: step 1/1. Its function is as follows. Catalyzes the stereoinversion of LL-2,6-diaminopimelate (L,L-DAP) to meso-diaminopimelate (meso-DAP), a precursor of L-lysine and an essential component of the bacterial peptidoglycan. In Chlamydia muridarum (strain MoPn / Nigg), this protein is Diaminopimelate epimerase.